Reading from the N-terminus, the 282-residue chain is MRIDTVNVLLEALPYIKEFYGKTFVIKFGGSAMKEEKAKKAFIQDIILLKYTGIKPVIVHGGGPAISQMMKELGIEPVFKNGHRVTDERTMEIVEMVLVGKINKEIVMNINLHGGRAVGICGKDSKLIVAEKETKYGDLGFVGKVKQVNPEILHALIENDYIPVIAPVGIGEDGHSYNINADTAAAEIAKSLMAEKLILLTDVDGVLKDGKLLSTLTPEEAENLIKDGVVTGGMIPKVECAISAVREGVGAVHIINGGLEHAILLEIFSRKGIGTMIKESEG.

Substrate contacts are provided by residues 62–63 (GG), R84, and N178.

This sequence belongs to the acetylglutamate kinase family. ArgB subfamily.

It is found in the cytoplasm. It carries out the reaction N-acetyl-L-glutamate + ATP = N-acetyl-L-glutamyl 5-phosphate + ADP. It functions in the pathway amino-acid biosynthesis; L-arginine biosynthesis; N(2)-acetyl-L-ornithine from L-glutamate: step 2/4. Functionally, catalyzes the ATP-dependent phosphorylation of N-acetyl-L-glutamate. The chain is Acetylglutamate kinase from Thermotoga neapolitana (strain ATCC 49049 / DSM 4359 / NBRC 107923 / NS-E).